A 179-amino-acid chain; its full sequence is Large ribosomal subunit protein uL5 (179 aa).

It belongs to the universal ribosomal protein uL5 family. Part of the 50S ribosomal subunit; part of the 5S rRNA/L5/L18/L25 subcomplex. Contacts the 5S rRNA and the P site tRNA. Forms a bridge to the 30S subunit in the 70S ribosome.

Functionally, this is one of the proteins that bind and probably mediate the attachment of the 5S RNA into the large ribosomal subunit, where it forms part of the central protuberance. In the 70S ribosome it contacts protein S13 of the 30S subunit (bridge B1b), connecting the 2 subunits; this bridge is implicated in subunit movement. Contacts the P site tRNA; the 5S rRNA and some of its associated proteins might help stabilize positioning of ribosome-bound tRNAs. This Shewanella sp. (strain MR-4) protein is Large ribosomal subunit protein uL5.